The sequence spans 398 residues: Tryptophan synthase beta chain (398 aa).

Lysine 89 carries the N6-(pyridoxal phosphate)lysine modification.

It belongs to the TrpB family. As to quaternary structure, tetramer of two alpha and two beta chains. Requires pyridoxal 5'-phosphate as cofactor.

It carries out the reaction (1S,2R)-1-C-(indol-3-yl)glycerol 3-phosphate + L-serine = D-glyceraldehyde 3-phosphate + L-tryptophan + H2O. The protein operates within amino-acid biosynthesis; L-tryptophan biosynthesis; L-tryptophan from chorismate: step 5/5. Functionally, the beta subunit is responsible for the synthesis of L-tryptophan from indole and L-serine. The protein is Tryptophan synthase beta chain of Methanopyrus kandleri (strain AV19 / DSM 6324 / JCM 9639 / NBRC 100938).